The primary structure comprises 896 residues: Myelin regulatory factor-like protein (896 aa).

The segment at residues 111–403 (GLPHRTFHNC…SNPGQFENDI (293 aa)) is a DNA-binding region (NDT80). Residues 449-557 (SDSRAKQNVQ…KLTNNLEERI (109 aa)) enclose the Peptidase S74 domain. Residues 541–573 (GAVKQLCKLTNNLEERIEELEIWNRKLARLKRL) are a coiled coil. A helical membrane pass occupies residues 622-638 (VFQSLVITLIAVMAFCL). Residues 648-658 (APSSNLTSSQE) show a composition bias toward polar residues. The tract at residues 648–672 (APSSNLTSSQEPALPSTASPSAPNT) is disordered. Low complexity predominate over residues 659-672 (PALPSTASPSAPNT).

It belongs to the MRF family.

Its subcellular location is the membrane. The chain is Myelin regulatory factor-like protein (MYRFL) from Bos taurus (Bovine).